The primary structure comprises 349 residues: Nicotinate-nucleotide--dimethylbenzimidazole phosphoribosyltransferase (349 aa).

Glu-315 (proton acceptor) is an active-site residue.

This sequence belongs to the CobT family.

The catalysed reaction is 5,6-dimethylbenzimidazole + nicotinate beta-D-ribonucleotide = alpha-ribazole 5'-phosphate + nicotinate + H(+). It participates in nucleoside biosynthesis; alpha-ribazole biosynthesis; alpha-ribazole from 5,6-dimethylbenzimidazole: step 1/2. In terms of biological role, catalyzes the synthesis of alpha-ribazole-5'-phosphate from nicotinate mononucleotide (NAMN) and 5,6-dimethylbenzimidazole (DMB). The polypeptide is Nicotinate-nucleotide--dimethylbenzimidazole phosphoribosyltransferase (Variovorax paradoxus (strain S110)).